The chain runs to 506 residues: Glutamate--tRNA ligase (506 aa).

The short motif at 24–34 is the 'HIGH' region element; the sequence is PSPTGLQHIGG. Zn(2+) is bound by residues Cys121, Cys123, Cys148, and His150. The short motif at 266–270 is the 'KMSKS' region element; the sequence is KLSKR. Residue Lys269 coordinates ATP.

The protein belongs to the class-I aminoacyl-tRNA synthetase family. Glutamate--tRNA ligase type 1 subfamily. Monomer. The cofactor is Zn(2+).

Its subcellular location is the cytoplasm. The enzyme catalyses tRNA(Glu) + L-glutamate + ATP = L-glutamyl-tRNA(Glu) + AMP + diphosphate. Catalyzes the attachment of glutamate to tRNA(Glu) in a two-step reaction: glutamate is first activated by ATP to form Glu-AMP and then transferred to the acceptor end of tRNA(Glu). In Borrelia duttonii (strain Ly), this protein is Glutamate--tRNA ligase.